Reading from the N-terminus, the 603-residue chain is NADH-ubiquinone oxidoreductase chain 5 (603 aa).

16 consecutive transmembrane segments (helical) span residues 4–24 (YTTM…ATLI), 36–56 (VKMT…MFMC), 87–107 (MMFI…SLWY), 114–134 (INQF…LVTA), 137–157 (LFQL…LIGW), 171–191 (AILY…WFLL), 200–220 (QMIL…LLAA), 241–261 (TPVS…FLLI), 272–292 (LIQT…AICA), 301–320 (IVAF…IGIN), 325–347 (AFLH…GSII), 366–386 (LPLT…MPFL), 407–429 (WALS…MILL), 457–477 (LTIG…PTSP), 482–502 (IPLY…LTAF), and 583–603 (MIKL…LLIM).

The protein belongs to the complex I subunit 5 family. Core subunit of respiratory chain NADH dehydrogenase (Complex I) which is composed of 45 different subunits.

It localises to the mitochondrion inner membrane. It catalyses the reaction a ubiquinone + NADH + 5 H(+)(in) = a ubiquinol + NAD(+) + 4 H(+)(out). Core subunit of the mitochondrial membrane respiratory chain NADH dehydrogenase (Complex I) which catalyzes electron transfer from NADH through the respiratory chain, using ubiquinone as an electron acceptor. Essential for the catalytic activity and assembly of complex I. This Hylobates lar (Lar gibbon) protein is NADH-ubiquinone oxidoreductase chain 5 (MT-ND5).